The following is a 100-amino-acid chain: Urease subunit gamma (100 aa).

Belongs to the urease gamma subunit family. As to quaternary structure, heterotrimer of UreA (gamma), UreB (beta) and UreC (alpha) subunits. Three heterotrimers associate to form the active enzyme.

Its subcellular location is the cytoplasm. The enzyme catalyses urea + 2 H2O + H(+) = hydrogencarbonate + 2 NH4(+). It participates in nitrogen metabolism; urea degradation; CO(2) and NH(3) from urea (urease route): step 1/1. This Mycobacteroides abscessus (strain ATCC 19977 / DSM 44196 / CCUG 20993 / CIP 104536 / JCM 13569 / NCTC 13031 / TMC 1543 / L948) (Mycobacterium abscessus) protein is Urease subunit gamma.